The primary structure comprises 469 residues: Sulfate adenylyltransferase subunit 1 (469 aa).

Residues 22–224 (KDLMRFITCG…NMTWYPGSPL (203 aa)) form the tr-type G domain. The tract at residues 31-38 (GSVDDGKS) is G1. Residue 31–38 (GSVDDGKS) participates in GTP binding. The tract at residues 89–93 (GITID) is G2. Residues 110–113 (DTPG) form a G3 region. GTP-binding positions include 110–114 (DTPGH) and 165–168 (NKMD). Positions 165-168 (NKMD) are G4. The segment at 202–204 (SAL) is G5.

Belongs to the TRAFAC class translation factor GTPase superfamily. Classic translation factor GTPase family. CysN/NodQ subfamily. As to quaternary structure, heterodimer composed of CysD, the smaller subunit, and CysN.

The catalysed reaction is sulfate + ATP + H(+) = adenosine 5'-phosphosulfate + diphosphate. The protein operates within sulfur metabolism; hydrogen sulfide biosynthesis; sulfite from sulfate: step 1/3. With CysD forms the ATP sulfurylase (ATPS) that catalyzes the adenylation of sulfate producing adenosine 5'-phosphosulfate (APS) and diphosphate, the first enzymatic step in sulfur assimilation pathway. APS synthesis involves the formation of a high-energy phosphoric-sulfuric acid anhydride bond driven by GTP hydrolysis by CysN coupled to ATP hydrolysis by CysD. The sequence is that of Sulfate adenylyltransferase subunit 1 from Psychromonas ingrahamii (strain DSM 17664 / CCUG 51855 / 37).